Consider the following 174-residue polypeptide: Gamma-crystallin F (174 aa).

Beta/gamma crystallin 'Greek key' domains follow at residues 2–40 (GKITFYEDRGFQGRHYECSSDHSNLQPYFSRCNSIRVDS) and 41–83 (GCWM…RLIP). The tract at residues 84–87 (HTGS) is connecting peptide. Beta/gamma crystallin 'Greek key' domains follow at residues 88–128 (HRLR…NVLE) and 129–171 (GWWV…RRAV).

The protein belongs to the beta/gamma-crystallin family.

Functionally, crystallins are the dominant structural components of the vertebrate eye lens. The polypeptide is Gamma-crystallin F (CRYGF) (Bos taurus (Bovine)).